Here is a 190-residue protein sequence, read N- to C-terminus: Frataxin homolog, mitochondrial (190 aa).

This sequence belongs to the frataxin family. Monomer (probable predominant form). Oligomer. Interacts with IscU. Component of the mitochondrial core iron-sulfur cluster (ISC) assembly complex at least composed of the cysteine desulfurase Nfs1, the scaffold protein IscU, the accessory protein bcn92/Isd11/Lyrm4, and probably fh/frataxin.

It is found in the mitochondrion. It catalyses the reaction 4 Fe(2+) + O2 + 4 H(+) = 4 Fe(3+) + 2 H2O. Functionally, promotes the biosynthesis of heme as well as the assembly and repair of iron-sulfur clusters by delivering Fe(2+) to proteins involved in these pathways. May play a role in the protection against iron-catalyzed oxidative stress through its ability to catalyze the oxidation of Fe(2+) to Fe(3+). May be able to store large amounts of the metal in the form of a ferrihydrite mineral by oligomerization. Required for ecdysteroidogenesis in the prothoracic gland which is necessary for larval to pupal transition. The chain is Frataxin homolog, mitochondrial from Drosophila melanogaster (Fruit fly).